A 297-amino-acid polypeptide reads, in one-letter code: MKNNIVIITGITASGKSELCDNLREKYGNISIINCDSKQVYKEIPIITAQPLKQEEFYKLYGYVSAKENYSVGLWLEDLEKEVNHALENAQIPIITGGSGLYISSFIKGLSSMPQISQEVRKNVSELRKNLSKEEFYKLVLSKDSKVQDKICINDSHRLSRALEVITETGKTIFVWQENRQPPLFDNFKIYTILPKREDVYQKINSRFIKMIENGAIDEVKKLLSMNLAPNLPAMKAHGVPEIVKYLKGEITLDEAIQIAQTNTRHYAKRQYTWFKNQFPSSEVIDCANELTALEIF.

10 to 17 (GITASGKS) contributes to the ATP binding site. 12-17 (TASGKS) contacts substrate. An interaction with substrate tRNA region spans residues 36–39 (DSKQ).

The protein belongs to the IPP transferase family. As to quaternary structure, monomer. It depends on Mg(2+) as a cofactor.

The catalysed reaction is adenosine(37) in tRNA + dimethylallyl diphosphate = N(6)-dimethylallyladenosine(37) in tRNA + diphosphate. Its function is as follows. Catalyzes the transfer of a dimethylallyl group onto the adenine at position 37 in tRNAs that read codons beginning with uridine, leading to the formation of N6-(dimethylallyl)adenosine (i(6)A). In Wolbachia pipientis wMel, this protein is tRNA dimethylallyltransferase.